We begin with the raw amino-acid sequence, 188 residues long: Dual specificity protein phosphatase 18 (188 aa).

One can recognise a Tyrosine-protein phosphatase domain in the interval 19–160; sequence GLSQITKSLF…LIHYELQLFG (142 aa). The interval 95-141 is sufficient for mitochondrial localization; sequence MQKGRTLLHCAAGVSRSAALCLAYLMKYHAMSLVDAHTWTKSCRPII. Catalysis depends on C104, which acts as the Phosphocysteine intermediate.

This sequence belongs to the protein-tyrosine phosphatase family. Non-receptor class dual specificity subfamily.

Its subcellular location is the cytoplasm. It localises to the nucleus. It is found in the mitochondrion inner membrane. It carries out the reaction O-phospho-L-tyrosyl-[protein] + H2O = L-tyrosyl-[protein] + phosphate. The catalysed reaction is O-phospho-L-seryl-[protein] + H2O = L-seryl-[protein] + phosphate. The enzyme catalyses O-phospho-L-threonyl-[protein] + H2O = L-threonyl-[protein] + phosphate. Its function is as follows. Can dephosphorylate single and diphosphorylated synthetic MAPK peptides, with preference for the phosphotyrosine and diphosphorylated forms over phosphothreonine. In vitro, dephosphorylates p-nitrophenyl phosphate (pNPP). In Mus musculus (Mouse), this protein is Dual specificity protein phosphatase 18 (Dusp18).